The following is a 407-amino-acid chain: Imidazolonepropionase (407 aa).

Fe(3+) contacts are provided by H68 and H70. H68 and H70 together coordinate Zn(2+). 4-imidazolone-5-propanoate contacts are provided by R77, Y140, and H173. Y140 is a binding site for N-formimidoyl-L-glutamate. Residue H238 participates in Fe(3+) binding. Residue H238 participates in Zn(2+) binding. Q241 provides a ligand contact to 4-imidazolone-5-propanoate. D313 is a binding site for Fe(3+). D313 is a binding site for Zn(2+). Residues N315 and G317 each contribute to the N-formimidoyl-L-glutamate site. Residue T318 participates in 4-imidazolone-5-propanoate binding.

This sequence belongs to the metallo-dependent hydrolases superfamily. HutI family. Zn(2+) is required as a cofactor. Fe(3+) serves as cofactor.

It localises to the cytoplasm. It catalyses the reaction 4-imidazolone-5-propanoate + H2O = N-formimidoyl-L-glutamate. The protein operates within amino-acid degradation; L-histidine degradation into L-glutamate; N-formimidoyl-L-glutamate from L-histidine: step 3/3. In terms of biological role, catalyzes the hydrolytic cleavage of the carbon-nitrogen bond in imidazolone-5-propanoate to yield N-formimidoyl-L-glutamate. It is the third step in the universal histidine degradation pathway. The protein is Imidazolonepropionase of Burkholderia mallei (strain ATCC 23344).